Consider the following 255-residue polypeptide: 5-oxoprolinase subunit A (255 aa).

This sequence belongs to the LamB/PxpA family. As to quaternary structure, forms a complex composed of PxpA, PxpB and PxpC.

The catalysed reaction is 5-oxo-L-proline + ATP + 2 H2O = L-glutamate + ADP + phosphate + H(+). Catalyzes the cleavage of 5-oxoproline to form L-glutamate coupled to the hydrolysis of ATP to ADP and inorganic phosphate. The protein is 5-oxoprolinase subunit A of Thermococcus onnurineus (strain NA1).